The following is a 776-amino-acid chain: ADP-ribosylation factor GTPase-activating protein AGD2 (776 aa).

The region spanning 2–226 (AGFINLEDSP…IHQVLTYAQQ (225 aa)) is the BAR domain. The tract at residues 248 to 267 (QSELDSQQASAKADPSDVGG) is disordered. Residues 290–421 (EVTKQGYLLK…WVNKITAAIT (132 aa)) enclose the PH domain. The Arf-GAP domain occupies 467 to 604 (DDVLTILREI…ALVVKDEREA (138 aa)). The segment at 482-505 (CAECNAPDPDWASLNLGVLMCIEC) adopts a C4-type zinc-finger fold. ANK repeat units follow at residues 683 to 712 (QGCS…DINM) and 716 to 745 (HGRT…RPSI).

Expressed in roots, hypocotyls, cotyledons, leaf and shoot apical meristems and siliques.

In terms of biological role, probable GTPase-activating protein. The protein is ADP-ribosylation factor GTPase-activating protein AGD2 (AGD2) of Arabidopsis thaliana (Mouse-ear cress).